Reading from the N-terminus, the 85-residue chain is Small ribosomal subunit protein uS17 (85 aa).

It belongs to the universal ribosomal protein uS17 family. As to quaternary structure, part of the 30S ribosomal subunit.

Functionally, one of the primary rRNA binding proteins, it binds specifically to the 5'-end of 16S ribosomal RNA. The chain is Small ribosomal subunit protein uS17 from Mycoplasma genitalium (strain ATCC 33530 / DSM 19775 / NCTC 10195 / G37) (Mycoplasmoides genitalium).